Consider the following 595-residue polypeptide: Laccase-18 (595 aa).

The N-terminal stretch at 1-29 (MEKLSTAASLFCVVVAATALAMAVVGGEA) is a signal peptide. 2 consecutive Plastocyanin-like domains span residues 37 to 153 (MVHE…PRNG) and 162 to 316 (KDVP…YAGA). 2 N-linked (GlcNAc...) asparagine glycosylation sites follow: Asn-42 and Asn-48. Positions 87 and 89 each coordinate Cu cation. Asn-121 is a glycosylation site (N-linked (GlcNAc...) asparagine). Cu cation is bound by residues His-132 and His-134. N-linked (GlcNAc...) asparagine glycans are attached at residues Asn-206, Asn-345, Asn-382, Asn-402, Asn-409, Asn-439, and Asn-470. The 143-residue stretch at 429 to 571 (DFPVRPPRPF…ATAFIVEDGP (143 aa)) folds into the Plastocyanin-like 3 domain. Asn-488, His-491, His-493, His-550, Cys-551, His-552, His-556, and Met-561 together coordinate Cu cation. The interval 570–595 (GPTPETSLPPPPPEFKRCGTNGLSQP) is disordered.

It belongs to the multicopper oxidase family. The cofactor is Cu cation.

Its subcellular location is the secreted. The protein localises to the extracellular space. It localises to the apoplast. It carries out the reaction 4 hydroquinone + O2 = 4 benzosemiquinone + 2 H2O. Its function is as follows. Lignin degradation and detoxification of lignin-derived products. The sequence is that of Laccase-18 (LAC18) from Oryza sativa subsp. japonica (Rice).